Consider the following 27-residue polypeptide: Omega-conotoxin RVIA (27 aa).

Disulfide bonds link Cys-1-Cys-16, Cys-8-Cys-19, and Cys-15-Cys-26. A 4-hydroxyproline mark is found at Pro-4 and Pro-7.

The protein belongs to the conotoxin O1 superfamily. In terms of tissue distribution, expressed by the venom duct.

Its subcellular location is the secreted. In terms of biological role, omega-conotoxins act at presynaptic membranes, they bind and block voltage-gated calcium channels (Cav). The chain is Omega-conotoxin RVIA from Conus radiatus (Rayed cone).